Consider the following 274-residue polypeptide: Probable ribosomal RNA small subunit methyltransferase A (274 aa).

S-adenosyl-L-methionine contacts are provided by His22, Leu24, Gly50, Glu71, Asp99, and Asn114.

Belongs to the class I-like SAM-binding methyltransferase superfamily. rRNA adenine N(6)-methyltransferase family. RsmA subfamily.

Its subcellular location is the cytoplasm. Functionally, specifically dimethylates two adjacent adenosines in the loop of a conserved hairpin near the 3'-end of 16S rRNA in the 30S particle. May play a critical role in biogenesis of 30S subunits. This Natronomonas pharaonis (strain ATCC 35678 / DSM 2160 / CIP 103997 / JCM 8858 / NBRC 14720 / NCIMB 2260 / Gabara) (Halobacterium pharaonis) protein is Probable ribosomal RNA small subunit methyltransferase A.